The chain runs to 357 residues: Peptide chain release factor 1 (357 aa).

Position 232 is an N5-methylglutamine (Gln-232).

It belongs to the prokaryotic/mitochondrial release factor family. Post-translationally, methylated by PrmC. Methylation increases the termination efficiency of RF1.

It localises to the cytoplasm. Functionally, peptide chain release factor 1 directs the termination of translation in response to the peptide chain termination codons UAG and UAA. The sequence is that of Peptide chain release factor 1 from Maridesulfovibrio salexigens (strain ATCC 14822 / DSM 2638 / NCIMB 8403 / VKM B-1763) (Desulfovibrio salexigens).